The following is a 294-amino-acid chain: Foldase protein PrsA 1 (294 aa).

Residues 1–21 (MTKLKKVMISLVAATLLLLAG) form the signal peptide. The N-palmitoyl cysteine moiety is linked to residue cysteine 22. A lipid anchor (S-diacylglycerol cysteine) is attached at cysteine 22. In terms of domain architecture, PpiC spans 135–226 (EPNITVRHIL…YGYHLIQLVK (92 aa)).

The protein belongs to the PrsA family.

It is found in the cell membrane. The enzyme catalyses [protein]-peptidylproline (omega=180) = [protein]-peptidylproline (omega=0). Plays a major role in protein secretion by helping the post-translocational extracellular folding of several secreted proteins. The chain is Foldase protein PrsA 1 (prsA1) from Listeria innocua serovar 6a (strain ATCC BAA-680 / CLIP 11262).